A 145-amino-acid polypeptide reads, in one-letter code: Large ribosomal subunit protein uL15 (145 aa).

Positions 1-13 (MIRSKRKINKLRG) are enriched in basic residues. Positions 1–44 (MIRSKRKINKLRGSRSNGGGCTKKRRGAGNKGGRGNAGASKQHW) are disordered.

Belongs to the universal ribosomal protein uL15 family. Part of the 50S ribosomal subunit.

Binds to the 23S rRNA. The polypeptide is Large ribosomal subunit protein uL15 (Methanobrevibacter smithii (strain ATCC 35061 / DSM 861 / OCM 144 / PS)).